A 429-amino-acid chain; its full sequence is Inositol-3-phosphate synthase 1 (429 aa).

A helical transmembrane segment spans residues 12–32 (LGVLVVGVGGAVATTMIVGTL). NAD(+) is bound by residues A22, V23, D79, A116, A165, T167, Y201, S244, R276, D277, and K290.

This sequence belongs to the myo-inositol 1-phosphate synthase family. Homotetramer. The cofactor is NAD(+).

The protein resides in the membrane. The catalysed reaction is D-glucose 6-phosphate = 1D-myo-inositol 3-phosphate. The protein operates within polyol metabolism; myo-inositol biosynthesis; myo-inositol from D-glucose 6-phosphate: step 1/2. Functionally, key enzyme in myo-inositol biosynthesis pathway that catalyzes the conversion of glucose 6-phosphate to 1D-myo-inositol 3-phosphate in a NAD-dependent manner. The chain is Inositol-3-phosphate synthase 1 from Bacteroides thetaiotaomicron (strain ATCC 29148 / DSM 2079 / JCM 5827 / CCUG 10774 / NCTC 10582 / VPI-5482 / E50).